Consider the following 108-residue polypeptide: Trp operon repressor homolog (108 aa).

A DNA-binding region spans residues 59-82 (QRQISQLLGVGVATITRGSNELKS).

It belongs to the TrpR family. Homodimer.

The protein localises to the cytoplasm. In terms of biological role, this protein is an aporepressor. When complexed with L-tryptophan it binds the operator region of the trp operon and prevents the initiation of transcription. The protein is Trp operon repressor homolog of Aliivibrio fischeri (strain ATCC 700601 / ES114) (Vibrio fischeri).